The chain runs to 186 residues: MDKEHLKKNLQGKMEKALKVLDHELKGLRTGRASINLLDSVTVEAYGSKMPLSQVASLSTPDARTINVQVWDKSMVSSVEKGITIANLGLTPATDGQLIRLPIPTLTEERRQELVKLAHKYGEDTKISLRNIRRDGNEELKKLEKDNVIAKDEHHSLSEQVQKLTDDYSSKVDSVIKQKEQEIMTV.

Belongs to the RRF family.

The protein resides in the cytoplasm. Functionally, responsible for the release of ribosomes from messenger RNA at the termination of protein biosynthesis. May increase the efficiency of translation by recycling ribosomes from one round of translation to another. The sequence is that of Ribosome-recycling factor from Rickettsia massiliae (strain Mtu5).